Here is a 117-residue protein sequence, read N- to C-terminus: Immunoglobulin heavy variable 1-69D (117 aa).

The signal sequence occupies residues 1-19 (MDWTWRFLFVVAAATGVQS). Q20 carries the post-translational modification Pyrrolidone carboxylic acid. A framework-1 region spans residues 20 to 44 (QVQLVQSGAEVKKPGSSVKVSCKAS). The 98-residue stretch at 20–117 (QVQLVQSGAE…EDTAVYYCAR (98 aa)) folds into the Ig-like domain. Residues C41 and C115 are joined by a disulfide bond. The segment at 45-52 (GGTFSSYA) is complementarity-determining-1. Residues 53–69 (ISWVRQAPGQGLEWMGG) form a framework-2 region. Residues 70 to 77 (IIPIFGTA) are complementarity-determining-2. Positions 78–115 (NYAQKFQGRVTITADESTSTAYMELSSLRSEDTAVYYC) are framework-3. Positions 116-117 (AR) are complementarity-determining-3.

As to quaternary structure, immunoglobulins are composed of two identical heavy chains and two identical light chains; disulfide-linked.

It localises to the secreted. Its subcellular location is the cell membrane. In terms of biological role, v region of the variable domain of immunoglobulin heavy chains that participates in the antigen recognition. Immunoglobulins, also known as antibodies, are membrane-bound or secreted glycoproteins produced by B lymphocytes. In the recognition phase of humoral immunity, the membrane-bound immunoglobulins serve as receptors which, upon binding of a specific antigen, trigger the clonal expansion and differentiation of B lymphocytes into immunoglobulins-secreting plasma cells. Secreted immunoglobulins mediate the effector phase of humoral immunity, which results in the elimination of bound antigens. The antigen binding site is formed by the variable domain of one heavy chain, together with that of its associated light chain. Thus, each immunoglobulin has two antigen binding sites with remarkable affinity for a particular antigen. The variable domains are assembled by a process called V-(D)-J rearrangement and can then be subjected to somatic hypermutations which, after exposure to antigen and selection, allow affinity maturation for a particular antigen. This Homo sapiens (Human) protein is Immunoglobulin heavy variable 1-69D.